Consider the following 43-residue polypeptide: Lanthionine-containing peptide SapB (43 aa).

The signal sequence occupies residues 1–21 (MALLDLQAMDTPAEDSFGELA). 2 consecutive cross-links (lanthionine (Ser-Cys)) follow at residues 24–31 (SQVSLLVC) and 34–41 (SSLSVVLC). 2 positions are modified to 2,3-didehydroalanine (Ser): Ser-27 and Ser-37.

Belongs to the lanthionine-containing morphogen protein family. Maturation involves the enzymatic conversion of Ser into dehydrated AA and the formation of thioether bonds with cysteine. This is followed by membrane translocation and cleavage of the modified precursor.

In terms of biological role, lanthionine-containing peptide devoid of antibiotic properties, involved in the formation of aerial mycelium. Suggested to self-assemble at air-water interfaces, thus providing a film of surfactant through which nascent aerial hyphae can emerge. The aerial hyphae differentiate further into spores. The polypeptide is Lanthionine-containing peptide SapB (ramS) (Streptomyces griseus subsp. griseus (strain JCM 4626 / CBS 651.72 / NBRC 13350 / KCC S-0626 / ISP 5235)).